We begin with the raw amino-acid sequence, 220 residues long: ATP phosphoribosyltransferase (220 aa).

The protein belongs to the ATP phosphoribosyltransferase family. Short subfamily. Heteromultimer composed of HisG and HisZ subunits.

The protein localises to the cytoplasm. The catalysed reaction is 1-(5-phospho-beta-D-ribosyl)-ATP + diphosphate = 5-phospho-alpha-D-ribose 1-diphosphate + ATP. The protein operates within amino-acid biosynthesis; L-histidine biosynthesis; L-histidine from 5-phospho-alpha-D-ribose 1-diphosphate: step 1/9. Functionally, catalyzes the condensation of ATP and 5-phosphoribose 1-diphosphate to form N'-(5'-phosphoribosyl)-ATP (PR-ATP). Has a crucial role in the pathway because the rate of histidine biosynthesis seems to be controlled primarily by regulation of HisG enzymatic activity. The chain is ATP phosphoribosyltransferase from Janthinobacterium sp. (strain Marseille) (Minibacterium massiliensis).